Here is a 331-residue protein sequence, read N- to C-terminus: Ribose operon repressor (331 aa).

The 56-residue stretch at 1 to 56 (MTTIRDVAKHAKVSVATVSRVLNKKGYVSKEAEEAVLQAIKELNYQPSSVARSLYH) folds into the HTH lacI-type domain. The H-T-H motif DNA-binding region spans 4-23 (IRDVAKHAKVSVATVSRVLN).

In terms of biological role, transcriptional repressor for the ribose rbsDACBK operon. This chain is Ribose operon repressor (rbsR), found in Halalkalibacterium halodurans (strain ATCC BAA-125 / DSM 18197 / FERM 7344 / JCM 9153 / C-125) (Bacillus halodurans).